The following is a 442-amino-acid chain: Adenylosuccinate synthetase (442 aa).

GTP contacts are provided by residues G30 to K36 and G58 to T60. The active-site Proton acceptor is D31. Mg(2+)-binding residues include D31 and G58. IMP is bound by residues D31–K34, N56–H59, T148, R162, N241, T256, and R320. The Proton donor role is filled by H59. Residue T316–R322 coordinates substrate. GTP is bound by residues R322, K348 to D350, and G430 to G432.

The protein belongs to the adenylosuccinate synthetase family. Homodimer. Requires Mg(2+) as cofactor.

It is found in the cytoplasm. The enzyme catalyses IMP + L-aspartate + GTP = N(6)-(1,2-dicarboxyethyl)-AMP + GDP + phosphate + 2 H(+). The protein operates within purine metabolism; AMP biosynthesis via de novo pathway; AMP from IMP: step 1/2. In terms of biological role, plays an important role in the de novo pathway and in the salvage pathway of purine nucleotide biosynthesis. Catalyzes the first committed step in the biosynthesis of AMP from IMP. This chain is Adenylosuccinate synthetase, found in Trichoplax adhaerens (Trichoplax reptans).